The sequence spans 98 residues: MACCAPLCCSARTSPATTICSSDKFCRCGVCLPSTCPHTVWLLEPTCCDNCPPPCHIPQPCVPTCFLLNSSQPTPGLETINLTTYTQPSCEPCIPSCC.

A2 bears the N-acetylalanine mark. A run of 3 repeats spans residues 3–7 (CCAPL), 8–12 (CCSAR), and 47–51 (CCDNC). Positions 3–59 (CCAPLCCSARTSPATTICSSDKFCRCGVCLPSTCPHTVWLLEPTCCDNCPPPCHIPQ) are 3 X 5 AA repeats of C-C-X(3).

Belongs to the KRTAP type 3 family. Interacts with hair keratins.

In terms of biological role, in the hair cortex, hair keratin intermediate filaments are embedded in an interfilamentous matrix, consisting of hair keratin-associated proteins (KRTAP), which are essential for the formation of a rigid and resistant hair shaft through their extensive disulfide bond cross-linking with abundant cysteine residues of hair keratins. The matrix proteins include the high-sulfur and high-glycine-tyrosine keratins. The sequence is that of Keratin-associated protein 3-3 from Bos taurus (Bovine).